The chain runs to 79 residues: Conotoxin VnMKLT1-01121 (79 aa).

A signal peptide spans 1–22; the sequence is MKLTCMMIVAVLFLTAWTFVTA. Residues 23–48 constitute a propeptide that is removed on maturation; that stretch reads DDSRNGLEYLFPKAHYEMNPEASKLN. 3 disulfides stabilise this stretch: C53–C70, C60–C74, and C69–C78.

The protein belongs to the conotoxin O1 superfamily. In terms of tissue distribution, expressed by the venom duct.

It localises to the secreted. This is Conotoxin VnMKLT1-01121 from Conus ventricosus (Mediterranean cone).